The chain runs to 538 residues: Putative outer membrane porin BglH (538 aa).

Residues 1-25 (MFRRNLITSAILLMAPLAFSAQSLA) form the signal peptide. The disordered stretch occupies residues 52 to 82 (KDEEKKKYTPATVNRSVSTNDQGYAANPFPT). Over residues 62-73 (ATVNRSVSTNDQ) the composition is skewed to polar residues.

Belongs to the porin LamB (TC 1.B.3) family.

The protein resides in the cell outer membrane. May be a sugar porin with a broad carbohydrate specificity. The sequence is that of Putative outer membrane porin BglH (bglH) from Shigella sonnei (strain Ss046).